The primary structure comprises 636 residues: Threonine--tRNA ligase (636 aa).

The TGS domain occupies 1-63; the sequence is MPMITITLPD…EHDASLRIIT (63 aa). The segment at 245-536 is catalytic; sequence DHRKIGKAQD…LIEHHAGAFP (292 aa). The Zn(2+) site is built by Cys-336, His-387, and His-513.

Belongs to the class-II aminoacyl-tRNA synthetase family. As to quaternary structure, homodimer. It depends on Zn(2+) as a cofactor.

Its subcellular location is the cytoplasm. The enzyme catalyses tRNA(Thr) + L-threonine + ATP = L-threonyl-tRNA(Thr) + AMP + diphosphate + H(+). In terms of biological role, catalyzes the attachment of threonine to tRNA(Thr) in a two-step reaction: L-threonine is first activated by ATP to form Thr-AMP and then transferred to the acceptor end of tRNA(Thr). Also edits incorrectly charged L-seryl-tRNA(Thr). This is Threonine--tRNA ligase from Xanthomonas campestris pv. campestris (strain 8004).